The following is a 152-amino-acid chain: Ribosomal RNA large subunit methyltransferase H (152 aa).

S-adenosyl-L-methionine is bound by residues Leu-69, Gly-96, and Phe-118–Phe-123.

It belongs to the RNA methyltransferase RlmH family. In terms of assembly, homodimer.

It localises to the cytoplasm. The enzyme catalyses pseudouridine(1915) in 23S rRNA + S-adenosyl-L-methionine = N(3)-methylpseudouridine(1915) in 23S rRNA + S-adenosyl-L-homocysteine + H(+). Functionally, specifically methylates the pseudouridine at position 1915 (m3Psi1915) in 23S rRNA. This Mesomycoplasma hyopneumoniae (strain 232) (Mycoplasma hyopneumoniae) protein is Ribosomal RNA large subunit methyltransferase H.